Reading from the N-terminus, the 1826-residue chain is Kinesin-like protein KIF13B (1826 aa).

The 349-residue stretch at 5 to 353 (KVKVAVRIRP…LRYADRAKHI (349 aa)) folds into the Kinesin motor domain. 103-110 (GQTGSGKS) provides a ligand contact to ATP. The stretch at 364–439 (NARIIRDLRE…ESLGISLQSS (76 aa)) forms a coiled coil. Residues 471-535 (TLIGSANSQD…LHHGDRILWG (65 aa)) form the FHA domain. Residues 546–582 (KKKKKAEREDEDQDPSMKNENSSEQLDVDGDSSSEVS) are disordered. Residues 561-570 (SMKNENSSEQ) show a composition bias toward polar residues. 3 coiled-coil regions span residues 607 to 710 (MQSI…LDKR), 752 to 772 (SLEKLDNRLLDMRDLYQEWKE), and 1096 to 1143 (LNAL…ERNA). Ser661 carries the phosphoserine modification. Residues 1367-1420 (EQLTGKGKLSRRSISSPNVNRLSGSRQDLIPSYSLGSNKGRWESQQDVSQTTVS) form a disordered region. Composition is skewed to polar residues over residues 1378–1392 (RSISSPNVNRLSGSR) and 1409–1420 (ESQQDVSQTTVS). Position 1379 is a phosphoserine (Ser1379). The residue at position 1381 (Ser1381) is a Phosphoserine; by MARK2. Phosphoserine is present on residues Ser1382 and Ser1391. Phosphoserine; by MARK2 is present on Ser1410. Phosphoserine occurs at positions 1432, 1438, and 1537. A Phosphothreonine modification is found at Thr1545. Ser1559 carries the post-translational modification Phosphoserine. A compositionally biased stretch (low complexity) spans 1579–1607 (SDALGPGLDAAAPPGSMPTAPEAEPEAPI). Disordered stretches follow at residues 1579-1650 (SDAL…RVRR) and 1662-1698 (MLAGDPGCSPGAEGNAPAPGAGGQALASDSEEADEVP). Positions 1608 to 1624 (SHPPPPTAVPAEEPPGP) are enriched in pro residues. At Ser1644 the chain carries Phosphoserine. Residues 1671 to 1688 (PGAEGNAPAPGAGGQALA) are compositionally biased toward low complexity. A CAP-Gly domain is found at 1721-1763 (GPADFQEGTWVGVELDLPSGKNDGSIGGKQYFRCNPGYGLLVR). The residue at position 1797 (Ser1797) is a Phosphoserine.

Belongs to the TRAFAC class myosin-kinesin ATPase superfamily. Kinesin family. As to quaternary structure, binds to DLG1 and DLG4. Interacts (when phosphorylated at Ser-1381 and Ser-1410) with 14-3-3. Post-translationally, phosphorylated at Ser-1381 and Ser-1410 by MARK2, promoting interaction with 14-3-3 and inhibiting microtubule-dependent accumulation and formation of axons. In terms of tissue distribution, ubiquitous.

The protein resides in the cytoplasm. It is found in the cytoskeleton. The protein localises to the cell projection. Its subcellular location is the axon. Its function is as follows. Involved in reorganization of the cortical cytoskeleton. Regulates axon formation by promoting the formation of extra axons. May be functionally important for the intracellular trafficking of MAGUKs and associated protein complexes. The sequence is that of Kinesin-like protein KIF13B (KIF13B) from Homo sapiens (Human).